The sequence spans 244 residues: Cobalt transport protein CbiM (244 aa).

Residues 1–20 (MRKITFIAALLSLLPRYALA) form the signal peptide. A run of 6 helical transmembrane segments spans residues 31 to 51 (KWCLLWYSIYIPFLMAGLIYI), 63 to 83 (ILLGFAGAFVFALSALKLPSV), 95 to 115 (LGAILLGPLPMAVIGGIVLLF), 117 to 137 (ALLLAHGGITTLGANAFSMAV), 161 to 181 (VFLGAASGDLMTYIITSLQLA), and 201 to 221 (IFAVTQLPLAIGEGILTVIVL).

Belongs to the CbiM family. Forms an energy-coupling factor (ECF) transporter complex composed of an ATP-binding protein (A component, CbiO), a transmembrane protein (T component, CbiQ) and 2 possible substrate-capture proteins (S components, CbiM and CbiN) of unknown stoichimetry.

The protein resides in the cell membrane. The protein operates within cofactor biosynthesis; adenosylcobalamin biosynthesis. In terms of biological role, part of the energy-coupling factor (ECF) transporter complex CbiMNOQ involved in cobalt import. The sequence is that of Cobalt transport protein CbiM from Thermosediminibacter oceani (strain ATCC BAA-1034 / DSM 16646 / JW/IW-1228P).